Consider the following 557-residue polypeptide: Probable phenylalanine--tRNA ligase beta subunit (557 aa).

A B5 domain is found at Met276–Arg352. Positions 330, 336, 339, and 340 each coordinate Mg(2+).

It belongs to the phenylalanyl-tRNA synthetase beta subunit family. Type 2 subfamily. In terms of assembly, tetramer of two alpha and two beta subunits. It depends on Mg(2+) as a cofactor.

It is found in the cytoplasm. It carries out the reaction tRNA(Phe) + L-phenylalanine + ATP = L-phenylalanyl-tRNA(Phe) + AMP + diphosphate + H(+). In Encephalitozoon cuniculi (strain GB-M1) (Microsporidian parasite), this protein is Probable phenylalanine--tRNA ligase beta subunit.